The following is a 387-amino-acid chain: (S)-8-oxocitronellyl enol synthase (387 aa).

NADP(+)-binding positions include 36 to 38, 64 to 65, 82 to 83, 106 to 107, and Gln140; these read TGI, RR, DI, and SW. Active-site residues include Lys144 and Tyr177. Substrate contacts are provided by Lys144 and Tyr177. Residues Tyr177 and 211-213 each bind NADP(+); that span reads SMM.

The protein belongs to the short-chain dehydrogenases/reductases (SDR) family. Highly divergent. In terms of tissue distribution, expressed in leaves.

The enzyme catalyses (S)-8-oxocitronellyl enol + NADP(+) = (6E)-8-oxogeranial + NADPH + H(+). The catalysed reaction is (S)-8-oxocitronellyl enol + NAD(+) = (6E)-8-oxogeranial + NADH + H(+). It carries out the reaction (R)-8-oxocitronellyl enol + NADP(+) = (6E)-8-oxogeranial + NADPH + H(+). Iridoid synthase that catalyzes the first step in generation of the iridoid ring scaffold using the linear monoterpene (6E)-8-oxogeranial as substrate. Reduces 8-oxogeranial, generating an unstable product that is subsequently cyclized into several possible products, either non-enzymically or by dedicated cyclases. Iridoids comprise a large family of distinctive bicyclic monoterpenes that possess a wide range of pharmacological activities, including anticancer, anti-inflammatory, antifungal and antibacterial activities. The protein is (S)-8-oxocitronellyl enol synthase of Antirrhinum majus (Garden snapdragon).